The following is a 311-amino-acid chain: Lipoyl synthase (311 aa).

Residues C47, C52, C58, C73, C77, C80, and S286 each coordinate [4Fe-4S] cluster. In terms of domain architecture, Radical SAM core spans 59–276 (WSRHTATYLA…RSVGESLGLF (218 aa)).

This sequence belongs to the radical SAM superfamily. Lipoyl synthase family. Requires [4Fe-4S] cluster as cofactor.

The protein resides in the cytoplasm. It carries out the reaction [[Fe-S] cluster scaffold protein carrying a second [4Fe-4S](2+) cluster] + N(6)-octanoyl-L-lysyl-[protein] + 2 oxidized [2Fe-2S]-[ferredoxin] + 2 S-adenosyl-L-methionine + 4 H(+) = [[Fe-S] cluster scaffold protein] + N(6)-[(R)-dihydrolipoyl]-L-lysyl-[protein] + 4 Fe(3+) + 2 hydrogen sulfide + 2 5'-deoxyadenosine + 2 L-methionine + 2 reduced [2Fe-2S]-[ferredoxin]. Its pathway is protein modification; protein lipoylation via endogenous pathway; protein N(6)-(lipoyl)lysine from octanoyl-[acyl-carrier-protein]: step 2/2. Functionally, catalyzes the radical-mediated insertion of two sulfur atoms into the C-6 and C-8 positions of the octanoyl moiety bound to the lipoyl domains of lipoate-dependent enzymes, thereby converting the octanoylated domains into lipoylated derivatives. The polypeptide is Lipoyl synthase (Chlamydia trachomatis serovar A (strain ATCC VR-571B / DSM 19440 / HAR-13)).